The chain runs to 230 residues: NAD(P)H-hydrate epimerase (230 aa).

Residues 11-218 (AIDVDQELFT…ALQRKYELNL (208 aa)) enclose the YjeF N-terminal domain. 61–65 (NNGGD) is a binding site for (6S)-NADPHX. K(+) is bound by residues asparagine 62 and aspartate 126. (6S)-NADPHX-binding positions include 130 to 136 (GFSFKPP) and aspartate 159. K(+) is bound at residue serine 162.

This sequence belongs to the NnrE/AIBP family. It depends on K(+) as a cofactor.

The catalysed reaction is (6R)-NADHX = (6S)-NADHX. It carries out the reaction (6R)-NADPHX = (6S)-NADPHX. In terms of biological role, catalyzes the epimerization of the S- and R-forms of NAD(P)HX, a damaged form of NAD(P)H that is a result of enzymatic or heat-dependent hydration. This is a prerequisite for the S-specific NAD(P)H-hydrate dehydratase to allow the repair of both epimers of NAD(P)HX. The protein is NAD(P)H-hydrate epimerase of Drosophila erecta (Fruit fly).